Consider the following 78-residue polypeptide: U7-lycotoxin-Ls1e (78 aa).

The first 22 residues, 1–22 (MKLIIFTGLALLLIVSLIDVEA), serve as a signal peptide directing secretion. Positions 23 to 26 (QNEG) are excised as a propeptide.

This sequence belongs to the neurotoxin 19 (CSTX) family. 07 (U7-Lctx) subfamily. Contains 4 disulfide bonds. As to expression, expressed by the venom gland.

The protein resides in the secreted. The chain is U7-lycotoxin-Ls1e from Lycosa singoriensis (Wolf spider).